Consider the following 191-residue polypeptide: Calcium and integrin-binding protein 1 (191 aa).

Residue G2 is the site of N-myristoyl glycine attachment. EF-hand domains are found at residues 103–138 (TPDI…LTGE) and 148–183 (EMKQ…SPDF). Positions 116, 118, 120, 122, 127, 161, 163, 165, 167, and 172 each coordinate Ca(2+).

As to quaternary structure, monomer. Interacts with the heterodimeric integrin alpha-IIb/beta3 (ITGA2B-ITGB3). Interacts with ITGA2B (via cytoplasmic domain); the interaction is direct and calcium-dependent. Interacts with the protein kinases PLK2/SNK and PRKDC (via the region immediately upstream of the kinase domain). Interacts with PLK3; the interaction inhibits PLK3 kinase activity. Interacts with PSEN2. Interacts (via C-terminus) with F8. Interacts with NBR1 (via C-terminus). Interacts with FEZ1 (via C-terminus). Interacts with UBR5 (via C-terminus); the interaction is sensitive to DNA damage, and may target CIB1 for ubiquitin-mediated degradation. Interacts with IFI6; the interaction is direct. Interacts with BCL2. Interacts with ITPR3; the interaction occurs in a calcium dependent manner. Interacts with PTK2/FAK1. Interacts with MAP3K5; the interaction inhibits MAP3K5 activation by phosphorylation, and its subsequent interaction with TRAF2. Interacts (via C-terminal region) with STMN2 (via the N-terminal region); the interaction is direct, occurs in a calcium-dependent manner and attenuates the STMN2-induced neurite outgrowth inhibition. Interacts with SPHK1, the interaction occurs in a calcium-dependent manner. Interacts with ITGA2B (via C-terminal cytoplasmic tail); the interaction occurs upon platelet aggregation and is stabilized/increased in a calcium and magnesium-dependent manner. Interacts with PAK1 (via N-terminal region); the interaction is direct and occurs in a calcium-dependent manner. Interacts with RAC3 (via C-terminal region); the interaction induces their association with the cytoskeleton upon alpha-IIb/beta3 integrin-mediated adhesion. Interacts with ITGA5 and ITGAV. Interacts with MYO1C. Interacts with ITGA2B (via C-terminal cytoplasmic tail region). Interacts (via C-terminal region) with PPP3R1; the interaction increases upon cardiomyocytes hypertrophy. Interacts with CACNA1C; the interaction increases upon cardiomyocytes hypertrophy. Interacts with TAS1R2 (via C-terminus); this interaction is independent of the myristoylation state of CIB1. Interacts and forms a complex with TMC6 and TMC8; the interaction stabilizes each component of the complex. In terms of tissue distribution, expressed in cardiomyocytes and neurons (at protein level). Expressed during early neural development.

Its subcellular location is the membrane. The protein resides in the cell membrane. It is found in the sarcolemma. It localises to the apical cell membrane. The protein localises to the cell projection. Its subcellular location is the ruffle membrane. The protein resides in the filopodium tip. It is found in the growth cone. It localises to the lamellipodium. The protein localises to the cytoplasm. Its subcellular location is the cytoskeleton. The protein resides in the microtubule organizing center. It is found in the centrosome. It localises to the perinuclear region. The protein localises to the nucleus. Its subcellular location is the neuron projection. The protein resides in the perikaryon. Its function is as follows. Calcium-binding protein that plays a role in the regulation of numerous cellular processes, such as cell differentiation, cell division, cell proliferation, cell migration, thrombosis, angiogenesis, cardiac hypertrophy and apoptosis. Involved in bone marrow megakaryocyte differentiation by negatively regulating thrombopoietin-mediated signaling pathway. Participates in the endomitotic cell cycle of megakaryocyte, a form of mitosis in which both karyokinesis and cytokinesis are interrupted. Plays a role in integrin signaling by negatively regulating alpha-IIb/beta3 activation in thrombin-stimulated megakaryocytes preventing platelet aggregation. Up-regulates PTK2/FAK1 activity, and is also needed for the recruitment of PTK2/FAK1 to focal adhesions; it thus appears to play an important role in focal adhesion formation. Positively regulates cell migration on fibronectin in a CDC42-dependent manner, the effect being negatively regulated by PAK1. Functions as a negative regulator of stress activated MAP kinase (MAPK) signaling pathways. Down-regulates inositol 1,4,5-trisphosphate receptor-dependent calcium signaling. Involved in sphingosine kinase SPHK1 translocation to the plasma membrane in a N-myristoylation-dependent manner preventing TNF-alpha-induced apoptosis. Regulates serine/threonine-protein kinase PLK3 activity for proper completion of cell division progression. Plays a role in microtubule (MT) dynamics during neuronal development; disrupts the MT depolymerization activity of STMN2 attenuating NGF-induced neurite outgrowth and the MT reorganization at the edge of lamellipodia. Promotes cardiomyocyte hypertrophy via activation of the calcineurin/NFAT signaling pathway. Stimulates calcineurin PPP3R1 activity by mediating its anchoring to the sarcolemma. In ischemia-induced (pathological or adaptive) angiogenesis, stimulates endothelial cell proliferation, migration and microvessel formation by activating the PAK1 and ERK1/ERK2 signaling pathway. Also promotes cancer cell survival and proliferation. May regulate cell cycle and differentiation of spermatogenic germ cells, and/or differentiation of supporting Sertoli cells. Forms a complex with TMC6/EVER1 and TMC8/EVER2 in lymphocytes and keratynocytes where CIB1 stabilizes TMC6 and TMC8 levels and reciprocally. This is Calcium and integrin-binding protein 1 (Cib1) from Rattus norvegicus (Rat).